The following is a 213-amino-acid chain: Ribulose-phosphate 3-epimerase (213 aa).

S9 contacts substrate. A divalent metal cation is bound by residues H34, D36, and H66. The active-site Proton acceptor is the D36. Substrate-binding positions include H66, 139–142, 166–168, and 186–187; these read GFGG, DGG, and GS. D166 is an a divalent metal cation binding site. The Proton donor role is filled by D166.

It belongs to the ribulose-phosphate 3-epimerase family. Co(2+) is required as a cofactor. Fe(2+) serves as cofactor. It depends on Mn(2+) as a cofactor. Requires Zn(2+) as cofactor.

It catalyses the reaction D-ribulose 5-phosphate = D-xylulose 5-phosphate. Its pathway is carbohydrate degradation; pentose phosphate pathway; D-xylulose 5-phosphate from D-ribulose 5-phosphate (non-oxidative stage): step 1/1. In terms of biological role, catalyzes the reversible epimerization of D-ribulose 5-phosphate to D-xylulose 5-phosphate. This is Ribulose-phosphate 3-epimerase (RPE1) from Encephalitozoon cuniculi (strain GB-M1) (Microsporidian parasite).